The primary structure comprises 88 residues: Small ribosomal subunit protein uS17 (88 aa).

This sequence belongs to the universal ribosomal protein uS17 family. In terms of assembly, part of the 30S ribosomal subunit.

Its function is as follows. One of the primary rRNA binding proteins, it binds specifically to the 5'-end of 16S ribosomal RNA. This chain is Small ribosomal subunit protein uS17, found in Leuconostoc mesenteroides subsp. mesenteroides (strain ATCC 8293 / DSM 20343 / BCRC 11652 / CCM 1803 / JCM 6124 / NCDO 523 / NBRC 100496 / NCIMB 8023 / NCTC 12954 / NRRL B-1118 / 37Y).